Reading from the N-terminus, the 420-residue chain is Histidine--tRNA ligase (420 aa).

It belongs to the class-II aminoacyl-tRNA synthetase family. In terms of assembly, homodimer.

Its subcellular location is the cytoplasm. It carries out the reaction tRNA(His) + L-histidine + ATP = L-histidyl-tRNA(His) + AMP + diphosphate + H(+). The chain is Histidine--tRNA ligase from Streptomyces avermitilis (strain ATCC 31267 / DSM 46492 / JCM 5070 / NBRC 14893 / NCIMB 12804 / NRRL 8165 / MA-4680).